Consider the following 328-residue polypeptide: Malate dehydrogenase (328 aa).

Residue 11–17 participates in NAD(+) binding; it reads GAAGQIG. 2 residues coordinate substrate: R92 and R98. NAD(+) contacts are provided by residues N105, Q112, and 129–131; that span reads VGN. Substrate-binding residues include N131 and R162. The active-site Proton acceptor is H187.

It belongs to the LDH/MDH superfamily. MDH type 2 family.

It carries out the reaction (S)-malate + NAD(+) = oxaloacetate + NADH + H(+). Its function is as follows. Catalyzes the reversible oxidation of malate to oxaloacetate. This Coxiella burnetii (strain CbuK_Q154) (Coxiella burnetii (strain Q154)) protein is Malate dehydrogenase.